Reading from the N-terminus, the 833-residue chain is Ribosome biogenesis protein BOP1 homolog (833 aa).

The disordered stretch occupies residues 20-202; that stretch reads NKKSEPIAVS…DSDDSSEDES (183 aa). Low complexity predominate over residues 36-56; that stretch reads SKPTTTATTTVSKSPVSTITT. Acidic residues-rich tracts occupy residues 90–111 and 136–150; these read SEDD…EDVE and EAEE…EDDS. The span at 154–170 shows a compositional bias: low complexity; the sequence is SSKSSSSTTTTTTTTKK. Residues 182-192 show a composition bias toward polar residues; it reads KQWTNDPNQFY. A compositionally biased stretch (acidic residues) spans 193 to 202; sequence DSDDSSEDES. WD repeat units lie at residues 331 to 370, 488 to 527, and 529 to 569; these read TKAI…KEKT, GHKA…CLYS, and EVES…TQTE. A disordered region spans residues 568–592; it reads TEHSPETEKILTKPPTDSSTEQQQN. Over residues 582-592 the composition is skewed to polar residues; it reads PTDSSTEQQQN. WD repeat units lie at residues 618–660, 663–701, 704–743, 747–786, and 802–833; these read HHPF…TQSP, KSKT…LIKK, TGCR…RPYK, YHKM…DLLQ, and INDL…LYTN.

Belongs to the WD repeat BOP1/ERB1 family.

It localises to the nucleus. It is found in the nucleolus. The protein localises to the nucleoplasm. Its function is as follows. Required for maturation of ribosomal RNAs and formation of the large ribosomal subunit. The sequence is that of Ribosome biogenesis protein BOP1 homolog from Dictyostelium discoideum (Social amoeba).